A 253-amino-acid chain; its full sequence is Imidazole glycerol phosphate synthase subunit HisF (253 aa).

Catalysis depends on residues Asp11 and Asp130.

This sequence belongs to the HisA/HisF family. Heterodimer of HisH and HisF.

The protein resides in the cytoplasm. The catalysed reaction is 5-[(5-phospho-1-deoxy-D-ribulos-1-ylimino)methylamino]-1-(5-phospho-beta-D-ribosyl)imidazole-4-carboxamide + L-glutamine = D-erythro-1-(imidazol-4-yl)glycerol 3-phosphate + 5-amino-1-(5-phospho-beta-D-ribosyl)imidazole-4-carboxamide + L-glutamate + H(+). It functions in the pathway amino-acid biosynthesis; L-histidine biosynthesis; L-histidine from 5-phospho-alpha-D-ribose 1-diphosphate: step 5/9. Functionally, IGPS catalyzes the conversion of PRFAR and glutamine to IGP, AICAR and glutamate. The HisF subunit catalyzes the cyclization activity that produces IGP and AICAR from PRFAR using the ammonia provided by the HisH subunit. The sequence is that of Imidazole glycerol phosphate synthase subunit HisF from Clostridium beijerinckii (strain ATCC 51743 / NCIMB 8052) (Clostridium acetobutylicum).